The following is a 448-amino-acid chain: Phosphoglucosamine mutase (448 aa).

S102 serves as the catalytic Phosphoserine intermediate. Residues S102, D243, D245, and D247 each coordinate Mg(2+). Residue S102 is modified to Phosphoserine.

The protein belongs to the phosphohexose mutase family. Requires Mg(2+) as cofactor. Activated by phosphorylation.

It carries out the reaction alpha-D-glucosamine 1-phosphate = D-glucosamine 6-phosphate. Catalyzes the conversion of glucosamine-6-phosphate to glucosamine-1-phosphate. The protein is Phosphoglucosamine mutase of Mycobacterium bovis (strain ATCC BAA-935 / AF2122/97).